The chain runs to 404 residues: MQMGDTVFMFFCALLVWLMTPGLALFYGGMVKSKNVLSTAMHSFSSIAIVSIVWVLFGYTLAFAPGNSIIGGLEWAGLKGVGFDPGDYSDTIPHSLFMMFQMTFAVLTTAIISGAFAERMRFGAFLLFSVLWASLVYTPVAHWVWGGGWIGQLGALDFAGGNVVHISSGVAGLVLAIVLGKRKDGTASSPHNLIYTFLGGALIWFGWFGFNVGSALTLDGVAMYAFINTNTAAAAGIAGWILVEWIINKKPTMLGAVSGAIAGLVAITPAAGFVTPFASIIIGIIGGAVCFWGVFSLKKKFGYDDALDAFGLHGIGGTWGGIATGLFATTSVNSAGADGLFYGDASLIWKQIVAIAATYVFVFIVTFVIIKIVSLFLPLRATEEEESLGLDLTMHGEKAYQDSM.

9 helical membrane passes run 7–27, 44–64, 96–116, 125–145, 158–178, 227–247, 254–274, 277–297, and 352–372; these read VFMFFCALLVWLMTPGLALFY, FSSIAIVSIVWVLFGYTLAFA, LFMMFQMTFAVLTTAIISGAF, FLLFSVLWASLVYTPVAHWVW, FAGGNVVHISSGVAGLVLAIV, INTNTAAAAGIAGWILVEWII, LGAVSGAIAGLVAITPAAGFV, FASIIIGIIGGAVCFWGVFSL, and IVAIAATYVFVFIVTFVIIKI.

Belongs to the ammonia transporter channel (TC 1.A.11.2) family. In terms of assembly, interacts with NrgB for a correct localization of the latter. GlnK-AmtB complex interacts with TnrA.

It is found in the cell membrane. In terms of biological role, functions as an ammonium and methylammonium transporter in the absence of glutamine. Required for ammonium utilization at low concentrations or at low pH values, when ammonium is the single nitrogen source. Required for binding of NrgB to the membrane. Interaction between GlnK-AmtB complex and TnrA protects TnrA from proteolytic degradation. This chain is Ammonium transporter, found in Bacillus subtilis (strain 168).